The following is a 250-amino-acid chain: Uridylate kinase (250 aa).

Residue 19–22 participates in ATP binding; sequence KLSG. Residue Gly-61 participates in UMP binding. Residues Gly-62 and Arg-66 each contribute to the ATP site. UMP is bound by residues Asp-81 and 142-149; that span reads TGNPFFTT. ATP-binding residues include Thr-169, Gln-170, Tyr-175, and Asp-178.

This sequence belongs to the UMP kinase family. As to quaternary structure, homohexamer.

It is found in the cytoplasm. The enzyme catalyses UMP + ATP = UDP + ADP. It participates in pyrimidine metabolism; CTP biosynthesis via de novo pathway; UDP from UMP (UMPK route): step 1/1. Its activity is regulated as follows. Inhibited by UTP. Functionally, catalyzes the reversible phosphorylation of UMP to UDP. The polypeptide is Uridylate kinase (Rhodospirillum rubrum (strain ATCC 11170 / ATH 1.1.1 / DSM 467 / LMG 4362 / NCIMB 8255 / S1)).